The primary structure comprises 469 residues: ATP synthase subunit beta (469 aa).

An ATP-binding site is contributed by 155–162; that stretch reads GGAGVGKT.

The protein belongs to the ATPase alpha/beta chains family. As to quaternary structure, F-type ATPases have 2 components, CF(1) - the catalytic core - and CF(0) - the membrane proton channel. CF(1) has five subunits: alpha(3), beta(3), gamma(1), delta(1), epsilon(1). CF(0) has three main subunits: a(1), b(2) and c(9-12). The alpha and beta chains form an alternating ring which encloses part of the gamma chain. CF(1) is attached to CF(0) by a central stalk formed by the gamma and epsilon chains, while a peripheral stalk is formed by the delta and b chains.

It is found in the cell inner membrane. It carries out the reaction ATP + H2O + 4 H(+)(in) = ADP + phosphate + 5 H(+)(out). Produces ATP from ADP in the presence of a proton gradient across the membrane. The catalytic sites are hosted primarily by the beta subunits. In Helicobacter pylori (strain P12), this protein is ATP synthase subunit beta.